The sequence spans 424 residues: Sulfatase ppz1 (424 aa).

Residues Asp-13, Asp-203, and Asn-204 each contribute to the Ca(2+) site.

Belongs to the sulfatase family. Requires Ca(2+) as cofactor.

Sulfatase; part of the gene cluster that mediates the biosynthesis of pyrrolopyrazines, secondary metabolites showing insecticidal activity. The role of ppz1 within the pathway has still to be determined. The single multifunctional NRPS ppzA is sufficient to produce peramine via condensation of 1-pyrroline-5-carboxylate and arginine, N-methylation of the alpha-amino group of arginine and reduction of the thioester and the cyclization to form an iminium ion resulting in release from the peptide synthetase. Deprotonation of this intermediate and oxidation of the pyrroline ring would give rise to peramine. In Epichloe species that produce only peramine, the peramine synthetase gene is not localized in a gene cluster, in contrast to Metarhizium species that contain additional pyrrolopyrazine biosynthesis genes. The 2-oxoglutarate-Fe(II) type oxidoreductase ppzC hydroxylates peramine to yield the newly identified compound 8-hydroxyperamine whereas ppzD converts L-proline into trans-4-hydroxy-L-proline, a precursor of peramine biosynthesis. This is Sulfatase ppz1 from Metarhizium majus (strain ARSEF 297).